The chain runs to 427 residues: Kallistatin (427 aa).

Residues Met1–Gly20 form the signal peptide. Residues Asn33, Asn108, and Asn157 are each glycosylated (N-linked (GlcNAc...) asparagine). N-linked (GlcNAc...) (complex) asparagine glycosylation is present at Asn238.

This sequence belongs to the serpin family. Monomer and some homodimers. Post-translationally, the N-terminus is blocked. As to expression, expressed by the liver and secreted in plasma.

The protein resides in the secreted. Its function is as follows. Inhibits human amidolytic and kininogenase activities of tissue kallikrein. Inhibition is achieved by formation of an equimolar, heat- and SDS-stable complex between the inhibitor and the enzyme, and generation of a small C-terminal fragment of the inhibitor due to cleavage at the reactive site by tissue kallikrein. The chain is Kallistatin (SERPINA4) from Homo sapiens (Human).